Consider the following 261-residue polypeptide: Triosephosphate isomerase (261 aa).

10–12 (NWK) lines the substrate pocket. The active-site Electrophile is the H100. E172 serves as the catalytic Proton acceptor. Substrate is bound by residues G178, S218, and 239-240 (GG).

It belongs to the triosephosphate isomerase family. As to quaternary structure, homodimer.

It localises to the cytoplasm. It carries out the reaction D-glyceraldehyde 3-phosphate = dihydroxyacetone phosphate. It functions in the pathway carbohydrate biosynthesis; gluconeogenesis. It participates in carbohydrate degradation; glycolysis; D-glyceraldehyde 3-phosphate from glycerone phosphate: step 1/1. Involved in the gluconeogenesis. Catalyzes stereospecifically the conversion of dihydroxyacetone phosphate (DHAP) to D-glyceraldehyde-3-phosphate (G3P). The sequence is that of Triosephosphate isomerase from Mycobacteroides abscessus (strain ATCC 19977 / DSM 44196 / CCUG 20993 / CIP 104536 / JCM 13569 / NCTC 13031 / TMC 1543 / L948) (Mycobacterium abscessus).